A 28-amino-acid chain; its full sequence is Small integral membrane protein 47 (28 aa).

Residues 7–24 (VTLAMALFTILTSIYFFN) traverse the membrane as a helical segment.

The protein resides in the membrane. The protein is Small integral membrane protein 47 of Homo sapiens (Human).